We begin with the raw amino-acid sequence, 249 residues long: MIKLVLLRHGESQWNRENRFTGWYDIDLTDQGREEAANAGKLLREGGFVFDVAYTSVLKRAIRTLWSVLDAMDLMWIPVFKSWRLNERHYGALQGLNKSETSQKYGEEQVLVWRRSYDTPPPALEKSDERYPGSEPRYADLAEEEIPLSECLKDTVDRFLPIWHETIAPEIRKGRKVIIAAHGNSLRALVKYLDNISEEDIVGVNIPTGIPLVYELDDDLNALRSYYLGDQEALKKAVDAVASQGKASQ.

Substrate contacts are provided by residues 8 to 15 (RHGESQWN), 21 to 22 (TG), Arg-60, 87 to 90 (ERHY), Lys-98, 114 to 115 (RR), and 183 to 184 (GN). His-9 acts as the Tele-phosphohistidine intermediate in catalysis. The active-site Proton donor/acceptor is the Glu-87.

The protein belongs to the phosphoglycerate mutase family. BPG-dependent PGAM subfamily.

The enzyme catalyses (2R)-2-phosphoglycerate = (2R)-3-phosphoglycerate. It participates in carbohydrate degradation; glycolysis; pyruvate from D-glyceraldehyde 3-phosphate: step 3/5. Catalyzes the interconversion of 2-phosphoglycerate and 3-phosphoglycerate. The polypeptide is 2,3-bisphosphoglycerate-dependent phosphoglycerate mutase (Pelodictyon phaeoclathratiforme (strain DSM 5477 / BU-1)).